The chain runs to 477 residues: Cysteine--tRNA ligase (477 aa).

Cys42 serves as a coordination point for Zn(2+). The 'HIGH' region signature appears at Ala44–His54. Residues Cys220, His245, and Glu249 each coordinate Zn(2+). The short motif at Lys276 to Ser280 is the 'KMSKS' region element. Lys279 contributes to the ATP binding site.

This sequence belongs to the class-I aminoacyl-tRNA synthetase family. In terms of assembly, monomer. It depends on Zn(2+) as a cofactor.

It localises to the cytoplasm. It carries out the reaction tRNA(Cys) + L-cysteine + ATP = L-cysteinyl-tRNA(Cys) + AMP + diphosphate. The polypeptide is Cysteine--tRNA ligase (Mycolicibacterium smegmatis (strain ATCC 700084 / mc(2)155) (Mycobacterium smegmatis)).